The chain runs to 506 residues: Protein MGF 505-9R (506 aa).

Belongs to the asfivirus MGF 505 family.

In terms of biological role, plays a role in virus cell tropism, and may be required for efficient virus replication in macrophages. The chain is Protein MGF 505-9R from Ornithodoros (relapsing fever ticks).